Here is a 187-residue protein sequence, read N- to C-terminus: Adenine phosphoribosyltransferase (187 aa).

This sequence belongs to the purine/pyrimidine phosphoribosyltransferase family. In terms of assembly, homodimer.

It localises to the cytoplasm. It catalyses the reaction AMP + diphosphate = 5-phospho-alpha-D-ribose 1-diphosphate + adenine. It functions in the pathway purine metabolism; AMP biosynthesis via salvage pathway; AMP from adenine: step 1/1. Its function is as follows. Catalyzes a salvage reaction resulting in the formation of AMP, that is energically less costly than de novo synthesis. In Yersinia enterocolitica serotype O:8 / biotype 1B (strain NCTC 13174 / 8081), this protein is Adenine phosphoribosyltransferase.